A 264-amino-acid chain; its full sequence is Pro-opiomelanocortin (264 aa).

The first 26 residues, 1 to 26 (MPRSCCSRSGALLLALLLQASMEVRG), serve as a signal peptide directing secretion. Phenylalanine 87 carries the phenylalanine amide modification. Disordered regions lie at residues 88–204 (GRRN…DLEH) and 219–238 (RMEHFRWGSPPKDKRYGGFM). N-linked (GlcNAc...) asparagine glycosylation is present at asparagine 91. Composition is skewed to basic and acidic residues over residues 99 to 122 (QKREDVAAGEDRGLLPEGGPEPRG) and 130 to 142 (REGKRSYSMEHFR). Glutamic acid 1-amide is present on glutamate 131. Serine 135 is modified (N-acetylserine; in Corticotropin). The residue at position 147 (valine 147) is a Valine amide. At serine 165 the chain carries Phosphoserine. A compositionally biased stretch (basic and acidic residues) spans 172–186 (EFKRELTGQRPRAGD). A compositionally biased stretch (low complexity) spans 189 to 199 (DGPADDGAGPR). Residues 219–234 (RMEHFRWGSPPKDKRY) show a composition bias toward basic and acidic residues.

Belongs to the POMC family. Post-translationally, specific enzymatic cleavages at paired basic residues yield the different active peptides. As to expression, ACTH and MSH are produced by the pituitary gland.

The protein resides in the secreted. Its function is as follows. Stimulates the adrenal glands to release cortisol. In terms of biological role, anorexigenic peptide. Increases the pigmentation of skin by increasing melanin production in melanocytes. Increases the pigmentation of skin by increasing melanin production in melanocytes. Functionally, endogenous orexigenic opiate. Its function is as follows. Endogenous opiate. In Macaca nemestrina (Pig-tailed macaque), this protein is Pro-opiomelanocortin (POMC).